The primary structure comprises 316 residues: Acetaldehyde dehydrogenase (316 aa).

11-14 (SGNI) is an NAD(+) binding site. Residue cysteine 131 is the Acyl-thioester intermediate of the active site. NAD(+)-binding positions include 162–170 (SAGPGTRAN) and asparagine 289.

Belongs to the acetaldehyde dehydrogenase family. As to quaternary structure, interacts with MhpE.

It carries out the reaction acetaldehyde + NAD(+) + CoA = acetyl-CoA + NADH + H(+). Its pathway is aromatic compound metabolism; 3-phenylpropanoate degradation. Its function is as follows. Catalyzes the conversion of acetaldehyde to acetyl-CoA, using NAD(+) and coenzyme A. Is the final enzyme in the meta-cleavage pathway for the degradation of aromatic compounds. The polypeptide is Acetaldehyde dehydrogenase (Shigella sonnei (strain Ss046)).